The chain runs to 535 residues: Major glycerophosphoinositol permease GIT3 (535 aa).

The chain crosses the membrane as a helical span at residues 49–69 (VVTSVKANSLWPAFASGAGLF). Residue Asn75 is glycosylated (N-linked (GlcNAc...) asparagine). Transmembrane regions (helical) follow at residues 101–121 (NIASIAFVGTVVGQLGFGYIS), 137–157 (LIFFTLMCAVGSWGVTVQGFF), 165–185 (FFLGVAIGAEYPTSSVIASEF), 204–224 (AMIDSGFVVSAFVPFVLIWIF), and 232–252 (LWRVAIGLGVIPPLSLFFMRL). An N-linked (GlcNAc...) asparagine glycan is attached at Asn256. 6 helical membrane-spanning segments follow: residues 275–295 (WWLIVKFYWFRLTIVSLIWFI), 324–344 (WGWSIVFNLFYIPGAFLGAIS), 352–372 (LTLALGVGIQGVIGIAMSACL), 378–398 (HIAGFVVVFGIFTTFGEFGPG), 419–439 (GIAAAIGKIGAFVGTWVFPAI), and 455–475 (VPFYISSALCLFSACLAIFFC). Asn532 is a glycosylation site (N-linked (GlcNAc...) asparagine).

It belongs to the major facilitator superfamily. Sugar transporter (TC 2.A.1.1) family.

It localises to the cell membrane. The catalysed reaction is sn-glycerol 3-phosphocholine(out) = sn-glycerol 3-phosphocholine(in). In terms of biological role, glycerophosphodiester transporter that mediates uptake of glycerophosphocholine (GroPCho) with GIT4. GIT3 acts as the major GroPCho permease. Does not possess detectable glycerophosphoinositol (GroPIns) transport activity. The expanded ability to utilize GroPIns and GroPCho results from the organism's pathogenic nature and its need to occupy a variety of environments within its host organism. This possibility is buttressed by the fact that GroPIns and GroPCho are present and abundant in human fluids. In Candida albicans (strain SC5314 / ATCC MYA-2876) (Yeast), this protein is Major glycerophosphoinositol permease GIT3.